Consider the following 142-residue polypeptide: Transcription antitermination protein NusB (142 aa).

It belongs to the NusB family.

Involved in transcription antitermination. Required for transcription of ribosomal RNA (rRNA) genes. Binds specifically to the boxA antiterminator sequence of the ribosomal RNA (rrn) operons. This Streptococcus uberis (strain ATCC BAA-854 / 0140J) protein is Transcription antitermination protein NusB.